The primary structure comprises 433 residues: GTPase Der (433 aa).

EngA-type G domains follow at residues 3 to 167 (KIVS…DKNI) and 175 to 349 (PRIA…FNLR). Residues 9–16 (GRPNVGKS), 56–60 (DTGGY), 119–122 (NKID), 181–188 (GRPNVGKS), 228–232 (DTAGI), and 293–296 (NKWD) each bind GTP. Positions 350-433 (LRIKTSLLNK…IPIKILFRLK (84 aa)) constitute a KH-like domain.

It belongs to the TRAFAC class TrmE-Era-EngA-EngB-Septin-like GTPase superfamily. EngA (Der) GTPase family. Associates with the 50S ribosomal subunit.

Functionally, GTPase that plays an essential role in the late steps of ribosome biogenesis. This Karelsulcia muelleri (strain GWSS) (Sulcia muelleri) protein is GTPase Der.